The chain runs to 129 residues: Small ribosomal subunit protein uS11 (129 aa).

Belongs to the universal ribosomal protein uS11 family. In terms of assembly, part of the 30S ribosomal subunit. Interacts with proteins S7 and S18. Binds to IF-3.

Its function is as follows. Located on the platform of the 30S subunit, it bridges several disparate RNA helices of the 16S rRNA. Forms part of the Shine-Dalgarno cleft in the 70S ribosome. The polypeptide is Small ribosomal subunit protein uS11 (Erwinia tasmaniensis (strain DSM 17950 / CFBP 7177 / CIP 109463 / NCPPB 4357 / Et1/99)).